A 315-amino-acid polypeptide reads, in one-letter code: 10-epi-cubebol synthase (315 aa).

Residues aspartate 79, asparagine 220, serine 224, and glutamate 228 each contribute to the Mg(2+) site. Residues 79 to 83 (DDVCE) carry the DDXXD motif motif. An NXXXSXXXE motif motif is present at residues 220–228 (NDIYSLRKE).

The protein belongs to the terpene synthase family. It depends on Mg(2+) as a cofactor.

It carries out the reaction (2E,6E)-farnesyl diphosphate + H2O = 10-epi-cubebol + diphosphate. Its function is as follows. Catalyzes the cyclization of farnesyl diphosphate (FPP) to 10-epi-cubebol. Is also responsible for the formation of many other sesquiterpenes, mainly cadalanes and cubebanes, including 1,10-di-epi-cubebol and the cadalanes delta-cadinene, T-cadinol and alpha-cadinol. The protein is 10-epi-cubebol synthase of Sorangium cellulosum (strain So ce56) (Polyangium cellulosum (strain So ce56)).